The sequence spans 457 residues: Siroheme synthase (457 aa).

A precorrin-2 dehydrogenase /sirohydrochlorin ferrochelatase region spans residues Met-1–Thr-204. NAD(+) contacts are provided by residues Asp-22–Val-23 and Leu-43–Thr-44. Ser-128 is subject to Phosphoserine. Residues Gly-216–Tyr-457 are uroporphyrinogen-III C-methyltransferase. Position 225 (Pro-225) interacts with S-adenosyl-L-methionine. Catalysis depends on Asp-248, which acts as the Proton acceptor. The active-site Proton donor is Lys-270. S-adenosyl-L-methionine is bound by residues Gly-301 to Asp-303, Ile-306, Thr-331 to Ala-332, Met-382, and Gly-411.

The protein in the N-terminal section; belongs to the precorrin-2 dehydrogenase / sirohydrochlorin ferrochelatase family. This sequence in the C-terminal section; belongs to the precorrin methyltransferase family.

The enzyme catalyses uroporphyrinogen III + 2 S-adenosyl-L-methionine = precorrin-2 + 2 S-adenosyl-L-homocysteine + H(+). It carries out the reaction precorrin-2 + NAD(+) = sirohydrochlorin + NADH + 2 H(+). The catalysed reaction is siroheme + 2 H(+) = sirohydrochlorin + Fe(2+). It participates in cofactor biosynthesis; adenosylcobalamin biosynthesis; precorrin-2 from uroporphyrinogen III: step 1/1. The protein operates within cofactor biosynthesis; adenosylcobalamin biosynthesis; sirohydrochlorin from precorrin-2: step 1/1. Its pathway is porphyrin-containing compound metabolism; siroheme biosynthesis; precorrin-2 from uroporphyrinogen III: step 1/1. It functions in the pathway porphyrin-containing compound metabolism; siroheme biosynthesis; siroheme from sirohydrochlorin: step 1/1. It participates in porphyrin-containing compound metabolism; siroheme biosynthesis; sirohydrochlorin from precorrin-2: step 1/1. In terms of biological role, multifunctional enzyme that catalyzes the SAM-dependent methylations of uroporphyrinogen III at position C-2 and C-7 to form precorrin-2 via precorrin-1. Then it catalyzes the NAD-dependent ring dehydrogenation of precorrin-2 to yield sirohydrochlorin. Finally, it catalyzes the ferrochelation of sirohydrochlorin to yield siroheme. The polypeptide is Siroheme synthase (Salmonella gallinarum (strain 287/91 / NCTC 13346)).